The chain runs to 456 residues: MARGNAPRDSYHLVGISFFILGLGTLLPWNFFITAIPYFQGRLAGTNSSAETMGTNHTSPTDTFNFNNWVTLLSQLPLLLFTLLNSFLYQCIPESVRILGSLLAILLLFALTAALVKVDLSPGLFFSVTMASVWFINSFCAVLQGSLFGQLGTMPSTYSTLFLSGQGLAGIFAALAMLMSLASGVDAQTSALGYFITPCVGILLSIVCYLSLPHLKFARYYLTEKLSQAPTQELETKAELLQADEKNGVPISPQQASPTLDLDPEKEPEPEEPQKPGKPSVFVVFRKIWLTALCLVLVFTVTLSVFPAITAMVTTSSNSPGKWGLFFNPICCFLLFNVMDWLGRSLTSYFLWPDEDSQQLLPLLVCLRFLFVPLFMLCHVPQHARLPIIFRQDAYFITFMLLFAVSNGYLVSLTMCLAPRQVLPHEREVAGALMTFFLALGLSCGASLSFLFKALL.

The helical transmembrane segment at 13-33 threads the bilayer; that stretch reads LVGISFFILGLGTLLPWNFFI. N-linked (GlcNAc...) asparagine glycosylation occurs at Asn56. 5 helical membrane passes run 69–89, 98–118, 123–143, 161–181, and 192–212; these read WVTL…SFLY, ILGS…LVKV, GLFF…CAVL, LFLS…LMSL, and LGYF…YLSL. The tract at residues 248–277 is disordered; that stretch reads GVPISPQQASPTLDLDPEKEPEPEEPQKPG. Ser252 carries the phosphoserine modification. A compositionally biased stretch (basic and acidic residues) spans 263 to 275; the sequence is DPEKEPEPEEPQK. Helical transmembrane passes span 288–308, 323–343, 360–380, 396–416, and 432–452; these read IWLT…VFPA, WGLF…DWLG, LLPL…LCHV, FITF…LTMC, and ALMT…SFLF.

This sequence belongs to the SLC29A/ENT transporter (TC 2.A.57) family.

It is found in the apical cell membrane. Its subcellular location is the basolateral cell membrane. It localises to the nucleus membrane. It catalyses the reaction inosine(in) = inosine(out). The enzyme catalyses adenosine(in) = adenosine(out). It carries out the reaction uridine(out) = uridine(in). The catalysed reaction is thymidine(in) = thymidine(out). It catalyses the reaction hypoxanthine(out) = hypoxanthine(in). The enzyme catalyses adenine(out) = adenine(in). It carries out the reaction cytidine(in) = cytidine(out). The catalysed reaction is thymine(out) = thymine(in). It catalyses the reaction uracil(in) = uracil(out). The enzyme catalyses guanine(out) = guanine(in). It carries out the reaction guanosine(in) = guanosine(out). Bidirectional uniporter involved in the facilitative transport of nucleosides and nucleobases, and contributes to maintaining their cellular homeostasis. Functions as a Na(+)-independent, passive transporter. Involved in the transport of nucleosides such as inosine, adenosine, uridine, thymidine, cytidine and guanosine. Also able to transport purine nucleobases (hypoxanthine, adenine, guanine) and pyrimidine nucleobases (thymine, uracil). Involved in nucleoside transport at basolateral membrane of kidney cells, allowing liver absorption of nucleoside metabolites. Mediates apical nucleoside uptake into Sertoli cells, thereby regulating the transport of nucleosides in testis across the blood-testis-barrier. Mediates both the influx and efflux of hypoxanthine in skeletal muscle microvascular endothelial cells to control the amount of intracellular hypoxanthine available for xanthine oxidase-mediated ROS production. This chain is Equilibrative nucleoside transporter 2, found in Mus musculus (Mouse).